Here is a 70-residue protein sequence, read N- to C-terminus: Bowman-Birk type proteinase inhibitor A-II (70 aa).

7 disulfides stabilise this stretch: Cys-11–Cys-68, Cys-12–Cys-29, Cys-15–Cys-63, Cys-17–Cys-27, Cys-36–Cys-43, Cys-40–Cys-55, and Cys-45–Cys-53.

Belongs to the Bowman-Birk serine protease inhibitor family.

In terms of biological role, these proteins inhibit trypsin and chymotrypsin, having 2 sites of interaction with trypsin. The site of interaction with chymotrypsin has not been determined but is not independent of the trypsin-reactive sites. This chain is Bowman-Birk type proteinase inhibitor A-II, found in Arachis hypogaea (Peanut).